A 165-amino-acid chain; its full sequence is Endoribonuclease YbeY (165 aa).

Positions 130, 134, and 140 each coordinate Zn(2+).

This sequence belongs to the endoribonuclease YbeY family. Zn(2+) is required as a cofactor.

The protein resides in the cytoplasm. In terms of biological role, single strand-specific metallo-endoribonuclease involved in late-stage 70S ribosome quality control and in maturation of the 3' terminus of the 16S rRNA. This chain is Endoribonuclease YbeY, found in Streptococcus pneumoniae serotype 2 (strain D39 / NCTC 7466).